Consider the following 67-residue polypeptide: Conotoxin Cl6.6a (67 aa).

The N-terminal stretch at 1–24 (MKLTCVLIAAVLLLAVCQLDSADA) is a signal peptide. Residues 25 to 37 (TGYMRKNPSLRSP) constitute a propeptide that is removed on maturation. Intrachain disulfides connect Cys43/Cys57, Cys50/Cys61, and Cys56/Cys65.

It belongs to the conotoxin O1 superfamily. Expressed by the venom duct.

The protein localises to the secreted. The chain is Conotoxin Cl6.6a from Californiconus californicus (California cone).